Consider the following 268-residue polypeptide: Phycocyanobilin lyase subunit alpha (268 aa).

Belongs to the CpcE/RpcE/PecE family. In terms of assembly, cpcE and CpcF associate to form a lyase.

Its function is as follows. Required for the chromophorylation of the cpcA gene product. The sequence is that of Phycocyanobilin lyase subunit alpha (cpcE) from Picosynechococcus sp. (strain ATCC 27264 / PCC 7002 / PR-6) (Agmenellum quadruplicatum).